The primary structure comprises 205 residues: Guanylate kinase (205 aa).

In terms of domain architecture, Guanylate kinase-like spans 5–184 (GLLIVLSGPS…AVQKIKGIVE (180 aa)). Position 12-19 (12-19 (GPSGVGKG)) interacts with ATP.

Belongs to the guanylate kinase family.

Its subcellular location is the cytoplasm. The enzyme catalyses GMP + ATP = GDP + ADP. Its function is as follows. Essential for recycling GMP and indirectly, cGMP. This Listeria monocytogenes serotype 4b (strain F2365) protein is Guanylate kinase.